The following is a 309-amino-acid chain: Uridylate-specific endoribonuclease C (309 aa).

An N-terminal signal peptide occupies residues 1-22 (MASGYDFGWIPVLLSLFTLTDA). Residues 27 to 303 (VNQELSNIFN…IGTAYPKLLS (277 aa)) form the EndoU domain. Residues N53 and N121 are each glycosylated (N-linked (GlcNAc...) asparagine). Catalysis depends on residues H181, H197, and K242.

Belongs to the ENDOU family. As to quaternary structure, monomer. The cofactor is Mn(2+).

Its subcellular location is the secreted. It carries out the reaction ribonucleotidyl-uridine-RNA = a 5'-end dephospho-uridine-RNA + a 3'-end 2',3'-cyclophospho-ribonucleotide-RNA. Functionally, endoribonuclease that cleaves single-stranded RNAs at 5' of uridylates and releases a product with a 2',3'-cyclic phosphate at the 3'-end. The UU and GU sites are more efficiently cleaved than CU and AU sites. In Danio rerio (Zebrafish), this protein is Uridylate-specific endoribonuclease C (endouc).